The sequence spans 135 residues: Glutaredoxin-C5 (135 aa).

The region spanning 29 to 134 (AERVERLASE…PLLKEAGALW (106 aa)) is the Glutaredoxin domain. Cysteines 49 and 52 form a disulfide. The short motif at 132–135 (ALWL) is the Responsive for interaction with TGA factors element.

The protein belongs to the glutaredoxin family. CC-type subfamily.

The protein resides in the cytoplasm. It localises to the nucleus. Its function is as follows. Has a glutathione-disulfide oxidoreductase activity in the presence of NADPH and glutathione reductase. Reduces low molecular weight disulfides and proteins. This is Glutaredoxin-C5 (GRXC5) from Oryza sativa subsp. japonica (Rice).